The chain runs to 359 residues: GATA-binding factor 1-A (359 aa).

The segment at 1–21 (MDYTTLTTQDPDPNYTESGLA) is disordered. 2 consecutive GATA-type zinc fingers follow at residues 178 to 202 (CVNC…CNAC) and 232 to 256 (CSNC…CNAC). 2 disordered regions span residues 271–311 (MKKE…SPYP) and 323–359 (PMGH…VTPP). The span at 279–291 (RNRKVSSRSKKKK) shows a compositional bias: basic residues.

Expressed in the developing ventral blood island, and in both tadpole and adult erythrocytes.

It is found in the nucleus. Its function is as follows. Transcription factor that acts synergistically with tal1/scl and lmo2 to specify embryonic dorsal mesoderm to a hematopoietic fate. This is GATA-binding factor 1-A (gata1-a) from Xenopus laevis (African clawed frog).